We begin with the raw amino-acid sequence, 269 residues long: 23S rRNA (adenosine(1067)-2'-O)-methyltransferase (269 aa).

The S-adenosyl-L-methionine site is built by arginine 135, arginine 165, leucine 195, glycine 218, isoleucine 238, and leucine 247.

Belongs to the class IV-like SAM-binding methyltransferase superfamily. RNA methyltransferase TsnR/AvirB family. In terms of assembly, homodimer.

The enzyme catalyses adenosine(1067) in 23S rRNA + S-adenosyl-L-methionine = 2'-O-methyladenosine(1067) in 23S rRNA + S-adenosyl-L-homocysteine + H(+). In terms of biological role, specifically methylates the adenosine-1067 in 23S ribosomal RNA. Confers resistance to antibiotic thiostrepton. This is 23S rRNA (adenosine(1067)-2'-O)-methyltransferase (tsnR) from Streptomyces azureus.